The chain runs to 346 residues: UDP-3-O-acylglucosamine N-acyltransferase (346 aa).

Residue His-253 is the Proton acceptor of the active site.

This sequence belongs to the transferase hexapeptide repeat family. LpxD subfamily. As to quaternary structure, homotrimer.

It carries out the reaction a UDP-3-O-[(3R)-3-hydroxyacyl]-alpha-D-glucosamine + a (3R)-hydroxyacyl-[ACP] = a UDP-2-N,3-O-bis[(3R)-3-hydroxyacyl]-alpha-D-glucosamine + holo-[ACP] + H(+). Its pathway is bacterial outer membrane biogenesis; LPS lipid A biosynthesis. In terms of biological role, catalyzes the N-acylation of UDP-3-O-acylglucosamine using 3-hydroxyacyl-ACP as the acyl donor. Is involved in the biosynthesis of lipid A, a phosphorylated glycolipid that anchors the lipopolysaccharide to the outer membrane of the cell. In Rickettsia peacockii (strain Rustic), this protein is UDP-3-O-acylglucosamine N-acyltransferase.